The primary structure comprises 309 residues: VRATEKFAPIYFFCHPLQSAETDVAERANKRPIWIMGHMVNANYQIDEFVNLGANSIETDVSFDSSANPEYTYHGVPCDCRRWCKKWEYFNNFLKALRKATTPGDSKYHEKLVLVVFDLKTGSLYDNQAYDAGKKLAKNLLQHYWNNGNNGGRAYIVLSIPNLAHYKLITGFKETLKTEGHPELMEKVGYDFSGNDNIDQVANAYKKAGVTGHVWQSDGITNCVASFIRGLDRAKKAVKNRDSSNGYINKVYYWTVDKYATTREAFDIGVDGIMTNYPDVIANVLNESAYKGKFRLATYDDNPWETFKN.

A signal peptide is located at residue Val1. A propeptide spanning residues Arg2–Arg27 is cleaved from the precursor. Residue His38 is part of the active site. Residues Glu58 and Asp60 each contribute to the Mg(2+) site. Residue His74 is the Nucleophile of the active site. Disulfide bonds link Cys78–Cys84 and Cys80–Cys223. Asp118 contacts Mg(2+). N-linked (GlcNAc...) asparagine glycosylation is present at Asn286.

Belongs to the arthropod phospholipase D family. Class II subfamily. Mg(2+) is required as a cofactor. In terms of tissue distribution, expressed by the venom gland.

Its subcellular location is the secreted. The catalysed reaction is an N-(acyl)-sphingosylphosphocholine = an N-(acyl)-sphingosyl-1,3-cyclic phosphate + choline. It catalyses the reaction N-hexanoyl-sphing-4-enine-1-phosphocholine = N-(hexanoyl)-sphing-4-enine-1,3-cyclic phosphate + choline. It carries out the reaction N-(dodecanoyl)-sphing-4-enine-1-phosphocholine = N-dodecanoyl-sphing-4-enine-1,3-cyclic phosphate + choline. The enzyme catalyses a 1-acyl-sn-glycero-3-phosphocholine = a 1-acyl-sn-glycero-2,3-cyclic phosphate + choline. The catalysed reaction is 1-tetradecanoyl-sn-glycero-3-phosphocholine = 1-tetradecanoyl-sn-glycero-2,3-cyclic phosphate + choline. It catalyses the reaction 1-octanoyl-sn-glycero-3-phosphocholine = 1-octanoyl-sn-glycero-2,3-cyclic phosphate + choline. It carries out the reaction 1-hexadecanoyl-sn-glycero-3-phosphocholine = 1-hexadecanoyl-sn-glycero-2,3-cyclic phosphate + choline. The enzyme catalyses an N-(acyl)-sphingosylphosphoethanolamine = an N-(acyl)-sphingosyl-1,3-cyclic phosphate + ethanolamine. The catalysed reaction is N-dodecanoyl-heptadecasphing-4-enine-1-phosphoethanolamine = N-dodecanoyl-heptadecasphing-4-enine-1,3-cyclic phosphate + ethanolamine. Its function is as follows. Dermonecrotic toxins cleave the phosphodiester linkage between the phosphate and headgroup of certain phospholipids (sphingolipid and lysolipid substrates), forming an alcohol (often choline) and a cyclic phosphate. This toxin acts on sphingomyelin (SM) with high activity and on lysophosphatidylcholine (LPC) and ceramide phosphoethanolamine (CPE) with low activity. In vivo, shows potent insecticidal activities. On mammals, induces dermonecrosis, hemolysis, increased vascular permeability, edema, inflammatory response, and platelet aggregation. The polypeptide is Dermonecrotic toxin LarSicTox-alphaIB2bi (Loxosceles arizonica (Arizona brown spider)).